We begin with the raw amino-acid sequence, 129 residues long: Small ribosomal subunit protein uS11 (129 aa).

It belongs to the universal ribosomal protein uS11 family. As to quaternary structure, part of the 30S ribosomal subunit. Interacts with proteins S7 and S18. Binds to IF-3.

In terms of biological role, located on the platform of the 30S subunit, it bridges several disparate RNA helices of the 16S rRNA. Forms part of the Shine-Dalgarno cleft in the 70S ribosome. This is Small ribosomal subunit protein uS11 from Azorhizobium caulinodans (strain ATCC 43989 / DSM 5975 / JCM 20966 / LMG 6465 / NBRC 14845 / NCIMB 13405 / ORS 571).